The primary structure comprises 419 residues: Gamma-glutamyl phosphate reductase (419 aa).

This sequence belongs to the gamma-glutamyl phosphate reductase family.

It is found in the cytoplasm. The enzyme catalyses L-glutamate 5-semialdehyde + phosphate + NADP(+) = L-glutamyl 5-phosphate + NADPH + H(+). The protein operates within amino-acid biosynthesis; L-proline biosynthesis; L-glutamate 5-semialdehyde from L-glutamate: step 2/2. Functionally, catalyzes the NADPH-dependent reduction of L-glutamate 5-phosphate into L-glutamate 5-semialdehyde and phosphate. The product spontaneously undergoes cyclization to form 1-pyrroline-5-carboxylate. This is Gamma-glutamyl phosphate reductase from Solidesulfovibrio magneticus (strain ATCC 700980 / DSM 13731 / RS-1) (Desulfovibrio magneticus).